Here is a 79-residue protein sequence, read N- to C-terminus: Alpha-elapitoxin-Aa2e (79 aa).

Cystine bridges form between Cys-3/Cys-20, Cys-13/Cys-41, Cys-26/Cys-30, Cys-45/Cys-56, and Cys-57/Cys-62.

This sequence belongs to the three-finger toxin family. Long-chain subfamily. Type II alpha-neurotoxin sub-subfamily. Expressed by the venom gland.

It is found in the secreted. Functionally, binds with high affinity to muscular (alpha-1/CHRNA1) and neuronal (alpha-7/CHRNA7) nicotinic acetylcholine receptor (nAChR) and inhibits acetylcholine from binding to the receptor, thereby impairing neuromuscular and neuronal transmission. Produces paralysis, clear dyspnea and lethality on mice. The protein is Alpha-elapitoxin-Aa2e of Acanthophis antarcticus (Common death adder).